A 249-amino-acid chain; its full sequence is MTSQNPTQEPENNDHLIISQDSQHPANLIPELCAKFWHLGWVTGTGGGASIRKDDLVYLAPSGVQKELMKPEHIYVLDITKQLDPKQRIYLRSPPNLKPSQCTPLFMAAFTKRNAGCCIHTHSKWAVLITLLLESAPNTTMFEINNIEQIKAFGKGYTKSGNLGYHDTLRIPVIENTPHEEDLTEYLEEAMEKYPDTYAVLVRRHGVYVWGESVHKAKTQCESLDYLFQIAVDMKKLGLPWLSDVKPIA.

Cys-102 lines the substrate pocket. His-120 and His-122 together coordinate Zn(2+). Glu-148 (proton donor/acceptor) is an active-site residue. Position 205 (His-205) interacts with Zn(2+).

The protein belongs to the aldolase class II family. MtnB subfamily. Zn(2+) is required as a cofactor.

It localises to the cytoplasm. The enzyme catalyses 5-(methylsulfanyl)-D-ribulose 1-phosphate = 5-methylsulfanyl-2,3-dioxopentyl phosphate + H2O. It participates in amino-acid biosynthesis; L-methionine biosynthesis via salvage pathway; L-methionine from S-methyl-5-thio-alpha-D-ribose 1-phosphate: step 2/6. Its function is as follows. Catalyzes the dehydration of methylthioribulose-1-phosphate (MTRu-1-P) into 2,3-diketo-5-methylthiopentyl-1-phosphate (DK-MTP-1-P). In Botryotinia fuckeliana (strain B05.10) (Noble rot fungus), this protein is Methylthioribulose-1-phosphate dehydratase.